The sequence spans 425 residues: Serine--tRNA ligase (425 aa).

L-serine is bound at residue 233–235; that stretch reads TAE. 264–266 is a binding site for ATP; sequence RRE. Glu-287 is an L-serine binding site. 351–354 contacts ATP; sequence EISS. Ser-385 provides a ligand contact to L-serine.

Belongs to the class-II aminoacyl-tRNA synthetase family. Type-1 seryl-tRNA synthetase subfamily. In terms of assembly, homodimer. The tRNA molecule binds across the dimer.

It is found in the cytoplasm. It catalyses the reaction tRNA(Ser) + L-serine + ATP = L-seryl-tRNA(Ser) + AMP + diphosphate + H(+). It carries out the reaction tRNA(Sec) + L-serine + ATP = L-seryl-tRNA(Sec) + AMP + diphosphate + H(+). Its pathway is aminoacyl-tRNA biosynthesis; selenocysteinyl-tRNA(Sec) biosynthesis; L-seryl-tRNA(Sec) from L-serine and tRNA(Sec): step 1/1. In terms of biological role, catalyzes the attachment of serine to tRNA(Ser). Is also able to aminoacylate tRNA(Sec) with serine, to form the misacylated tRNA L-seryl-tRNA(Sec), which will be further converted into selenocysteinyl-tRNA(Sec). The protein is Serine--tRNA ligase of Synechococcus sp. (strain CC9902).